A 548-amino-acid polypeptide reads, in one-letter code: Cytochrome P450 monooxygenase lcsK (548 aa).

Transmembrane regions (helical) follow at residues 28–48 and 68–88; these read HAYP…LWAF and VLLF…RLFF. N172, N223, N242, and N404 each carry an N-linked (GlcNAc...) asparagine glycan. A heme-binding site is contributed by C487.

Belongs to the cytochrome P450 family. Heme is required as a cofactor.

It localises to the membrane. The protein operates within secondary metabolite biosynthesis. In terms of biological role, cytochrome P450 monooxygenase; part of the gene cluster that mediates the biosynthesis of the lipopeptide antibiotics leucinostatins that show extensive biological activities, including antimalarial, antiviral, antibacterial, antifungal, and antitumor activities, as well as phytotoxic. Leucinostatin A contains nine amino acid residues, including the unusual amino acid 4-methyl-L-proline (MePro), 2-amino-6-hydroxy-4-methyl-8-oxodecanoic acid (AHyMeOA), 3-hydroxyleucine (HyLeu), alpha-aminoisobutyric acid (AIB), beta-Ala, a 4-methylhex-2-enoic acid at the N-terminus as well as a N1,N1-dimethylpropane-1,2-diamine (DPD) at the C-terminus. The biosynthesis of leucinostatins is probably initiated with the assembly of 4-methylhex-2-enoic acid by a reducing PKS. Two reducing polyketide synthases, lcsB and lcsC, have been identified in the cluster and it is not clear which is the one that assembles 4-methylhex-2-enoic acid since both contain KS, AT, DH, cMT, ER, KR and ACP domains. The polyketide residue might be transferred to the NRPS lcsA, mediated by two additional enzymes, the acyl-CoA ligase lcsD and the thioesterase lcsE. The linear polyketide carboxylic acid, which is released from PKS, is converted to a CoA thioester by lcsD, and then lcsE hydrolyzes the thiol bond and shuttles the polyketide intermediate to lcsA. The C domain of the first module catalyzed the condensation of 4-methylhex-2-enoic acid and MePro carried by domain A1, followed by successive condensations of nine amino acids to trigger the elongation of the linear peptide. A5 and A6 domains of lcsA are proposed to incorporate leucine, A2 AHyMeOA, and A3 incorporates HyLeu. A4, A7 and A8 incorporate AIB. The AHyMeOA in leucinostatin A activated by the A2 might be produced by the second PKS (lcsB or lcsC) present within the cluster. The MePro is probably produced via leucine cyclization and may originate from a separate pathway, independent of the cluster. Another nonproteinogenic amino acid, beta-Ala, could be produced by an aspartic acid decarboxylase also localized outside of the cluster. Two candidates are VFPBJ_01400 and VFPBJ_10476. The final peptide scaffold may be released by the NAD(P)H-dependent thioester reductase (TE) at the C-terminal region of lcsA. Transamination of the lcsA product by the transaminase lcsP may produce DPD at the C-terminus. Further hydroxylation steps performed alternatively by the cytochrome P450 monooxygenases lcsI, lcsK and lcsN then yield the non-methylated leucinostatins precursor. It is also possible that leucines can be hydroxylated prior to their incorporation into the peptide. Varying extents of methylation then lead to the formation of leucinostatins A and B. This chain is Cytochrome P450 monooxygenase lcsK, found in Purpureocillium lilacinum (Paecilomyces lilacinus).